The sequence spans 461 residues: Cysteine--tRNA ligase (461 aa).

A Zn(2+)-binding site is contributed by Cys-28. The 'HIGH' region motif lies at 30-40 (ITVYDLCHIGH). Cys-209, His-234, and Glu-238 together coordinate Zn(2+). A 'KMSKS' region motif is present at residues 266–270 (KMSKS). An ATP-binding site is contributed by Lys-269.

It belongs to the class-I aminoacyl-tRNA synthetase family. As to quaternary structure, monomer. Requires Zn(2+) as cofactor.

Its subcellular location is the cytoplasm. It carries out the reaction tRNA(Cys) + L-cysteine + ATP = L-cysteinyl-tRNA(Cys) + AMP + diphosphate. The sequence is that of Cysteine--tRNA ligase from Escherichia fergusonii (strain ATCC 35469 / DSM 13698 / CCUG 18766 / IAM 14443 / JCM 21226 / LMG 7866 / NBRC 102419 / NCTC 12128 / CDC 0568-73).